A 1222-amino-acid chain; its full sequence is Chitin synthase 4 (1222 aa).

Disordered stretches follow at residues 1–101 (MSLP…ERNR) and 138–200 (TERT…KRIE). Polar residues-rich tracts occupy residues 11–24 (QAYN…NSPS) and 42–77 (NQAS…SPDG). Over residues 182–196 (SGKIKRKSRRHSKPP) the composition is skewed to basic residues. 2 consecutive transmembrane segments (helical) span residues 205–225 (PPTF…GFIM) and 243–263 (MGLI…TFGF). N-linked (GlcNAc...) asparagine glycosylation is found at Asn-378, Asn-418, and Asn-440. The helical transmembrane segment at 513-533 (ALILSVVGVRFFLAIIFQWFI) threads the bilayer. Residues 576-630 (TVYGSSDRSSKRASFLPTTSRFSSVGGPDIRSQGGRRMPTTMASQSTSNQLLTPN) are disordered. A compositionally biased stretch (polar residues) spans 616-630 (TMASQSTSNQLLTPN). Residues Asn-637 and Asn-1030 are each glycosylated (N-linked (GlcNAc...) asparagine). 3 helical membrane passes run 1055–1075 (FIIF…AFTF), 1089–1109 (IIPL…VIIT), and 1113–1133 (WSYI…NFVL). The tract at residues 1202 to 1222 (GGQTWTSPPGHQYNEEYYSDA) is disordered.

It belongs to the chitin synthase family. Class IV subfamily.

It localises to the cell membrane. The enzyme catalyses [(1-&gt;4)-N-acetyl-beta-D-glucosaminyl](n) + UDP-N-acetyl-alpha-D-glucosamine = [(1-&gt;4)-N-acetyl-beta-D-glucosaminyl](n+1) + UDP + H(+). In terms of biological role, polymerizes chitin, a structural polymer of the cell wall and septum, by transferring the sugar moiety of UDP-GlcNAc to the non-reducing end of the growing chitin polymer. Shows additive effects in septum formation with CHS1, CHS2, CHS3A, CHS5, CHS6 and CHS7. Regulates conidiation. Involved in virulence and mediates mycotoxin deoxinivalenol (DON) biosynthesis via the regulation of the expression of TRI4, TRI5 and TRI6. This Gibberella zeae (strain ATCC MYA-4620 / CBS 123657 / FGSC 9075 / NRRL 31084 / PH-1) (Wheat head blight fungus) protein is Chitin synthase 4.